A 232-amino-acid chain; its full sequence is Probable transcriptional regulatory protein Bd1964 (232 aa).

Belongs to the TACO1 family.

The protein localises to the cytoplasm. The chain is Probable transcriptional regulatory protein Bd1964 from Bdellovibrio bacteriovorus (strain ATCC 15356 / DSM 50701 / NCIMB 9529 / HD100).